A 55-amino-acid polypeptide reads, in one-letter code: uncharacterized protein (55 aa).

Residues 1–25 (MKFVKAIWPFVAVAIVFMFMSAFKF) form the signal peptide.

This is an uncharacterized protein from Bacillus subtilis (strain 168).